We begin with the raw amino-acid sequence, 1089 residues long: PALM2-AKAP2 fusion protein (1089 aa).

Positions Ser70 to Ile107 form a coiled coil. 3 disordered regions span residues Ser165 to His194, Pro210 to Asn231, and Pro289 to Gly362. Residues Ser173–Leu183 show a composition bias toward basic and acidic residues. 2 positions are modified to phosphoserine: Arg315 and Ser318. Basic and acidic residues predominate over residues Pro317–Asn328. The span at Gly329–Ala347 shows a compositional bias: polar residues. Ser348 bears the Phosphoserine mark. Residues Ser348–Cys357 show a composition bias toward low complexity. A Glycyl lysine isopeptide (Lys-Gly) (interchain with G-Cter in SUMO1); alternate cross-link involves residue Lys370. Lys370 is covalently cross-linked (Glycyl lysine isopeptide (Lys-Gly) (interchain with G-Cter in SUMO2); alternate). Residues Lys429–Pro517 form a disordered region. A compositionally biased stretch (basic and acidic residues) spans Leu455–Gln470. A compositionally biased stretch (low complexity) spans Gln471 to Leu508. Position 553 is a phosphoserine (Ser553). The segment at Thr592–Leu644 is disordered. Ser678, Ser682, and Ser734 each carry phosphoserine. Residues Phe712–Pro749 are compositionally biased toward polar residues. Disordered regions lie at residues Phe712–Glu783, Glu800–Lys899, and Thr915–Thr934. Thr743 carries the phosphothreonine modification. Residues Leu782–Gln795 are PKA-RII subunit binding domain. A compositionally biased stretch (basic and acidic residues) spans Gln801–Ser814. Ser847 carries the phosphoserine modification. Positions Gln850–Gly871 are enriched in basic and acidic residues. Positions Arg928–Val958 form a coiled coil. A phosphoserine mark is found at Ser936, Ser964, Ser995, and Ser1002. The disordered stretch occupies residues Gln946 to Leu1021.

In terms of tissue distribution, highly expressed in lung and weakly in thymus and cerebellum. Little or no expression in liver, heart and cerebral cortex. All isoforms are expressed in lung, but KL2A and KL2B isoforms are the principal isoforms in cerebellum.

It localises to the apical cell membrane. Its function is as follows. Binds to regulatory subunit (RII) of protein kinase A. May be involved in establishing polarity in signaling systems or in integrating PKA-RII isoforms with downstream effectors to capture, amplify and focus diffuse, trans-cellular signals carried by cAMP. Binds tp and modulates the structure of the actin cytoskeleton. This is PALM2-AKAP2 fusion protein from Mus musculus (Mouse).